The sequence spans 109 residues: Phosphoribosyl-ATP pyrophosphatase (109 aa).

It belongs to the PRA-PH family.

It is found in the cytoplasm. It catalyses the reaction 1-(5-phospho-beta-D-ribosyl)-ATP + H2O = 1-(5-phospho-beta-D-ribosyl)-5'-AMP + diphosphate + H(+). Its pathway is amino-acid biosynthesis; L-histidine biosynthesis; L-histidine from 5-phospho-alpha-D-ribose 1-diphosphate: step 2/9. The polypeptide is Phosphoribosyl-ATP pyrophosphatase (Alkalilimnicola ehrlichii (strain ATCC BAA-1101 / DSM 17681 / MLHE-1)).